Reading from the N-terminus, the 230-residue chain is Putative 14-3-3-like protein GF14-H (230 aa).

It belongs to the 14-3-3 family.

Is associated with a DNA binding complex that binds to the G box, a well-characterized cis-acting DNA regulatory element found in plant genes. The sequence is that of Putative 14-3-3-like protein GF14-H (GF14H) from Oryza sativa subsp. japonica (Rice).